Consider the following 380-residue polypeptide: Outer membrane protein 40 (380 aa).

Positions M1–A21 are cleaved as a signal peptide. Q22 is subject to Pyrrolidone carboxylic acid. The OmpA-like domain maps to P270–E380.

The protein belongs to the outer membrane OOP (TC 1.B.6) superfamily. Disulfide-linked heterodimer with Omp41.

The protein resides in the cell outer membrane. May have porin activity and function in peptidoglycan binding. The sequence is that of Outer membrane protein 40 from Porphyromonas gingivalis (strain ATCC BAA-308 / W83).